The following is a 201-amino-acid chain: NADH-quinone oxidoreductase subunit B 1 (201 aa).

[4Fe-4S] cluster contacts are provided by C80, C81, C145, and C175.

This sequence belongs to the complex I 20 kDa subunit family. NDH-1 is composed of 14 different subunits. Subunits NuoB, C, D, E, F, and G constitute the peripheral sector of the complex. Requires [4Fe-4S] cluster as cofactor.

Its subcellular location is the cell inner membrane. It carries out the reaction a quinone + NADH + 5 H(+)(in) = a quinol + NAD(+) + 4 H(+)(out). In terms of biological role, NDH-1 shuttles electrons from NADH, via FMN and iron-sulfur (Fe-S) centers, to quinones in the respiratory chain. The immediate electron acceptor for the enzyme in this species is believed to be ubiquinone. Couples the redox reaction to proton translocation (for every two electrons transferred, four hydrogen ions are translocated across the cytoplasmic membrane), and thus conserves the redox energy in a proton gradient. The protein is NADH-quinone oxidoreductase subunit B 1 of Rhodopseudomonas palustris (strain BisB18).